Here is a 298-residue protein sequence, read N- to C-terminus: tRNA uridine(34) hydroxylase (298 aa).

Residues 123–217 enclose the Rhodanese domain; the sequence is QNPDVTLVDT…YLEEIPVAES (95 aa). The Cysteine persulfide intermediate role is filled by C177.

It belongs to the TrhO family.

It catalyses the reaction uridine(34) in tRNA + AH2 + O2 = 5-hydroxyuridine(34) in tRNA + A + H2O. In terms of biological role, catalyzes oxygen-dependent 5-hydroxyuridine (ho5U) modification at position 34 in tRNAs. In Picosynechococcus sp. (strain ATCC 27264 / PCC 7002 / PR-6) (Agmenellum quadruplicatum), this protein is tRNA uridine(34) hydroxylase.